A 282-amino-acid polypeptide reads, in one-letter code: Serine/arginine-rich splicing factor 8 (282 aa).

Position 2 is an N-acetylserine (Ser2). Phosphoserine occurs at positions 2 and 26. The region spanning 14–92 (ITLKVDNLTY…RELRVQVARY (79 aa)) is the RRM domain. The segment at 91–282 (RYGRRDLPRS…SPEEEGQMSS (192 aa)) is disordered. Positions 93–107 (GRRDLPRSRQGEPRG) are enriched in basic and acidic residues. Composition is skewed to basic residues over residues 116–136 (RRSR…RSRS) and 144–154 (SRSRSRYRGSR). Low complexity-rich tracts occupy residues 155–177 (YSRS…PYSR) and 185–200 (YGGS…NSRY). Phosphoserine is present on residues Ser156, Ser158, Ser171, Ser173, and Ser196. Basic residues predominate over residues 201-210 (SRYHSSRSHS). 2 stretches are compositionally biased toward low complexity: residues 211–227 (KSGS…SKSS) and 234–255 (SSSV…SPPR). Positions 256-271 (VSKRKSKSRSRSKRPP) are enriched in basic residues. At Ser273 the chain carries Phosphoserine.

This sequence belongs to the splicing factor SR family. Strongly expressed in pancreas, spleen and prostate. Weakly expressed in lung, liver and thymus.

Its subcellular location is the nucleus. Involved in pre-mRNA alternative splicing. The protein is Serine/arginine-rich splicing factor 8 (SRSF8) of Homo sapiens (Human).